The chain runs to 514 residues: Glucose-1-phosphate adenylyltransferase small subunit 2, chloroplastic/amyloplastic/cytosolic (514 aa).

A chloroplast-targeting transit peptide spans 1–64 (MAMAAAMGVA…RRRPLVFSPR (64 aa)). A disordered region spans residues 35–74 (RPRRPRGVASSSSSSSSAGRRRRPLVFSPRAVSDSKSSQT). Positions 41–52 (GVASSSSSSSSA) are enriched in low complexity.

It belongs to the bacterial/plant glucose-1-phosphate adenylyltransferase family. Heterotetramer composed of two small and two large subunits. In terms of tissue distribution, expressed in leaves.

It localises to the plastid. It is found in the chloroplast. Its subcellular location is the amyloplast. The protein localises to the cytoplasm. The protein resides in the cytosol. The catalysed reaction is alpha-D-glucose 1-phosphate + ATP + H(+) = ADP-alpha-D-glucose + diphosphate. It functions in the pathway glycan biosynthesis; starch biosynthesis. With respect to regulation, activated by 3'phosphoglycerate, inhibited by orthophosphate. Allosteric regulation. Inhibited by inorganic phosphate (Pi). Functionally, involved in synthesis of starch. Catalyzes the synthesis of ADP-glucose, a molecule that serves as an activated glycosyl donor for alpha-1,4-glucan synthesis. The chloroplastic isoform 1 is essential for starch synthesis in leaf chloroplasts and the cytosolic isoform 2 for synthesis in seed endosperm. This Oryza sativa subsp. japonica (Rice) protein is Glucose-1-phosphate adenylyltransferase small subunit 2, chloroplastic/amyloplastic/cytosolic.